The following is a 369-amino-acid chain: MTIDWDSILSYNTIKVVRIRDRRLGILHLCFLIVIVLYVVVYSAIIKKGYVTTEEPVGSIRTSLLAPDELKSNQAYCKNNTEPYPYEKLDCVYYDEKLALFPIGDDVGFTASTRMRISDQTVNCSLMNPSCKFYTNTSMNVYLADIESFTVLIDHTMYAPSSQIQFNGDDLSGYVLDQNGNEIQLNESVNTIGVQGKPDILQLGKLLEFAGVDLDGPSLVNSSNSIRYDGCVLFVFIEYSNTFSYDLKKIKYVYSIKKVDDTAYDVPEVIILNNENSRLYYKRHAIRLIFIQTGVIGSFNFQSLLLTLVSGLGLLTVSTLIVDQLAIRFLPQRKSYSSLKFQTTESFRMKKKIVNDDGEDKLYHNIEAL.

Residues 1–25 (MTIDWDSILSYNTIKVVRIRDRRLG) are Cytoplasmic-facing. A helical transmembrane segment spans residues 26–46 (ILHLCFLIVIVLYVVVYSAII). The Lumenal portion of the chain corresponds to 47–369 (KKGYVTTEEP…DKLYHNIEAL (323 aa)). The segment at 283–296 (RHAIRLIFIQTGVI) is pore-forming motif.

The protein belongs to the P2X receptor family.

It is found in the contractile vacuole membrane. Its function is as follows. P2X receptors are ATP-gated ion channels that play a role in intracellular calcium signaling. Not required for the purinergic response to extracellular nucleotides. Not essential for osmoregulation. Inward currents are evoked by intracellular ATP and ATP analogs. Insensitive to the P2 receptor antagonists PPADS and suramin, and also copper ions. Inhibited by sodium ions. Permeable to chloride ions. The protein is P2X receptor B (p2xB) of Dictyostelium discoideum (Social amoeba).